We begin with the raw amino-acid sequence, 396 residues long: Chalcone synthase A (396 aa).

Cys170 is a catalytic residue.

It belongs to the thiolase-like superfamily. Chalcone/stilbene synthases family.

It carries out the reaction (E)-4-coumaroyl-CoA + 3 malonyl-CoA + 3 H(+) = 2',4,4',6'-tetrahydroxychalcone + 3 CO2 + 4 CoA. The protein operates within secondary metabolite biosynthesis; flavonoid biosynthesis. In terms of biological role, the primary product of this enzyme is 4,2',4',6'-tetrahydroxychalcone (also termed naringenin-chalcone or chalcone) which can under specific conditions spontaneously isomerize into naringenin. In Ipomoea purpurea (Common morning glory), this protein is Chalcone synthase A (CHSA).